Consider the following 384-residue polypeptide: 8-amino-7-oxononanoate synthase (384 aa).

Position 21 (arginine 21) interacts with substrate. 108 to 109 (GF) provides a ligand contact to pyridoxal 5'-phosphate. Histidine 133 is a binding site for substrate. Pyridoxal 5'-phosphate contacts are provided by serine 179, histidine 207, and threonine 233. Residue lysine 236 is modified to N6-(pyridoxal phosphate)lysine. A substrate-binding site is contributed by threonine 352.

It belongs to the class-II pyridoxal-phosphate-dependent aminotransferase family. BioF subfamily. In terms of assembly, homodimer. The cofactor is pyridoxal 5'-phosphate.

The catalysed reaction is 6-carboxyhexanoyl-[ACP] + L-alanine + H(+) = (8S)-8-amino-7-oxononanoate + holo-[ACP] + CO2. Its pathway is cofactor biosynthesis; biotin biosynthesis. Its function is as follows. Catalyzes the decarboxylative condensation of pimeloyl-[acyl-carrier protein] and L-alanine to produce 8-amino-7-oxononanoate (AON), [acyl-carrier protein], and carbon dioxide. This Shigella sonnei (strain Ss046) protein is 8-amino-7-oxononanoate synthase.